Consider the following 312-residue polypeptide: Malate dehydrogenase (312 aa).

NAD(+)-binding positions include 7 to 13 (GAAGGIG) and aspartate 34. Substrate contacts are provided by arginine 81 and arginine 87. Residues asparagine 94 and 117 to 119 (ITN) contribute to the NAD(+) site. Substrate-binding residues include asparagine 119 and arginine 153. Histidine 177 acts as the Proton acceptor in catalysis. Position 227 (methionine 227) interacts with NAD(+).

Belongs to the LDH/MDH superfamily. MDH type 1 family. As to quaternary structure, homodimer.

It carries out the reaction (S)-malate + NAD(+) = oxaloacetate + NADH + H(+). Its function is as follows. Catalyzes the reversible oxidation of malate to oxaloacetate. This chain is Malate dehydrogenase, found in Shigella dysenteriae serotype 1 (strain Sd197).